The primary structure comprises 147 residues: Small ribosomal subunit protein bS6 (147 aa).

A compositionally biased stretch (basic and acidic residues) spans 97 to 141 (EEGPSAMMRKADRDRERDDRGGGFRGDREGGFRGDRGPRRPREEA). The disordered stretch occupies residues 97-147 (EEGPSAMMRKADRDRERDDRGGGFRGDREGGFRGDRGPRRPREEAPAVVEE).

This sequence belongs to the bacterial ribosomal protein bS6 family.

Functionally, binds together with bS18 to 16S ribosomal RNA. This is Small ribosomal subunit protein bS6 from Nitrobacter hamburgensis (strain DSM 10229 / NCIMB 13809 / X14).